The primary structure comprises 249 residues: tRNA (guanine-N(1)-)-methyltransferase (249 aa).

Residues G121 and 141–146 (LGDFVL) each bind S-adenosyl-L-methionine.

It belongs to the RNA methyltransferase TrmD family. In terms of assembly, homodimer.

The protein localises to the cytoplasm. The catalysed reaction is guanosine(37) in tRNA + S-adenosyl-L-methionine = N(1)-methylguanosine(37) in tRNA + S-adenosyl-L-homocysteine + H(+). Its function is as follows. Specifically methylates guanosine-37 in various tRNAs. The chain is tRNA (guanine-N(1)-)-methyltransferase from Cereibacter sphaeroides (strain KD131 / KCTC 12085) (Rhodobacter sphaeroides).